The sequence spans 103 residues: Small ribosomal subunit protein uS10 (103 aa).

Belongs to the universal ribosomal protein uS10 family. As to quaternary structure, part of the 30S ribosomal subunit.

Its function is as follows. Involved in the binding of tRNA to the ribosomes. The chain is Small ribosomal subunit protein uS10 from Campylobacter fetus subsp. fetus (strain 82-40).